A 224-amino-acid chain; its full sequence is CDP-diacylglycerol--inositol 3-phosphatidyltransferase (224 aa).

The Cytoplasmic segment spans residues 1-8; it reads MTIAEHDN. A helical membrane pass occupies residues 9 to 29; that stretch reads VFIFVPNLIGYARIVLALIAF. Residues 30–35 are Lumenal-facing; sequence WFMSTN. The chain crosses the membrane as a helical span at residues 36–52; sequence YVISGWCYVTSALLDAV. Mg(2+) is bound by residues aspartate 50 and aspartate 53. Topologically, residues 53 to 76 are cytoplasmic; it reads DGQAARAFNQSTRFGAMLDQLTDR. A CDP-1,2-diacyl-sn-glycerol-binding residues include glycine 54, arginine 58, and threonine 64. Mg(2+) contacts are provided by aspartate 71 and aspartate 75. Residue aspartate 75 is the Proton acceptor of the active site. A helical transmembrane segment spans residues 77-97; sequence CGTTGLLVTLAYFYPRYMFWF. A topological domain (lumenal) is located at residue glutamine 98. Residues 99–119 traverse the membrane as a helical segment; the sequence is LSIAIDVACHWLFMQTSVVVG. The Cytoplasmic segment spans residues 120–138; that stretch reads RSSHKVNDNFIMRLYYQKD. A helical transmembrane segment spans residues 139-159; it reads ILTFMCCVNELFYVCLYLLHF. Residues 160 to 163 are Lumenal-facing; the sequence is TYGP. Residues 164–184 traverse the membrane as a helical segment; it reads LIFGASLFKILAFLTGPFAVL. Residues 185–224 lie on the Cytoplasmic side of the membrane; that stretch reads KALISVMHAYVAGIDLAAVDVRERQERRQKSEPVSGKKVE.

It belongs to the CDP-alcohol phosphatidyltransferase class-I family. It depends on Mn(2+) as a cofactor. Mg(2+) is required as a cofactor. As to expression, in adults, expression is higher in the head than in the body (at protein level).

Its subcellular location is the apical cell membrane. The protein localises to the lateral cell membrane. The catalysed reaction is a CDP-1,2-diacyl-sn-glycerol + myo-inositol = a 1,2-diacyl-sn-glycero-3-phospho-(1D-myo-inositol) + CMP + H(+). Its function is as follows. Catalyzes the biosynthesis of phosphatidylinositol (PtdIns) as well as PtdIns:inositol exchange reaction. May thus act to reduce an excessive cellular PtdIns content. The exchange activity is due to the reverse reaction of PtdIns synthase and is dependent on CMP, which is tightly bound to the enzyme. Required for the regeneration of the signaling molecule phosphatidylinositol 4,5-bisphosphate (PtdInsP2) from phosphatidic acid (PA) and maintenance of its steady supply during signaling, thus playing an essential role during phospholipase C-mediated transduction. This function is essential in photoreceptors for light-activated recycling of PtdInsP2 during phototransduction. As a key enzyme of the phosphoinositide pathway, indirectly involved in the polarized secretion of basal membrane (BM) proteins in follicle epithelial (FE) cells through promoting PtdInsP2 synthesis in the apical and lateral plasma membranes of FE cells. PtdInsP2 controls the localization of Crag and perhaps the localization and expression of strat, both of which are essential for restricting the secretion of BM proteins to the basal surface. The sequence is that of CDP-diacylglycerol--inositol 3-phosphatidyltransferase from Drosophila melanogaster (Fruit fly).